Consider the following 772-residue polypeptide: Tubulin monoglycylase TTLL3 (772 aa).

The disordered stretch occupies residues 50 to 81 (PTLLPPQKDLDSSAMGDSDTTEDEDEDEDEEF). Acidic residues predominate over residues 68–81 (DTTEDEDEDEDEEF). Residues 151–510 (ARNVLKLVVK…RMLDRNCDTG (360 aa)) form the TTL domain. ATP contacts are provided by residues lysine 283, 289–290 (RG), 321–324 (QKYI), 334–336 (KFD), and 378–379 (CN). Residue arginine 289 participates in a protein binding. Serine 381 contacts L-glutamate. Mg(2+) is bound by residues aspartate 456, glutamate 469, and asparagine 471. Glutamate 469 lines the ATP pocket.

It depends on Mg(2+) as a cofactor. In terms of tissue distribution, expressed in brain, heart, kidney, testis, liver, lung, muscle, spleen, trachea and colon.

The protein localises to the cytoplasm. It is found in the cytoskeleton. Its subcellular location is the cell projection. It localises to the cilium. The protein resides in the cilium axoneme. The protein localises to the flagellum axoneme. The catalysed reaction is L-glutamyl-[protein] + glycine + ATP = glycyl-L-glutamyl-[protein] + ADP + phosphate + H(+). In terms of biological role, monoglycylase which modifies alpha- and beta-tubulin, adding a single glycine on the gamma-carboxyl groups of specific glutamate residues to generate monoglycine side chains within the C-terminal tail of tubulin. Not involved in elongation step of the polyglycylation reaction. Preferentially glycylates a beta-tail peptide over the alpha-tail, although shifts its preference toward alpha-tail as beta-tail glutamylation increases. Competes with polyglutamylases for modification site on beta-tubulin substrate, thereby creating an anticorrelation between glycylation and glutamylation reactions. Together with TTLL8, mediates microtubule glycylation of primary and motile cilia, which is essential for their stability and maintenance. Involved in microtubule glycylation of primary cilia in colon which controls cell proliferation of epithelial cells and plays an essential role in colon cancer development. Together with TTLL8, glycylates sperm flagella which regulates axonemal dynein motor activity, thereby controlling flagellar beat, directional sperm swimming and male fertility. This chain is Tubulin monoglycylase TTLL3, found in Homo sapiens (Human).